Reading from the N-terminus, the 471-residue chain is Probable pyruvate, phosphate dikinase regulatory protein, chloroplastic (471 aa).

A chloroplast-targeting transit peptide spans 1–49; that stretch reads MSSSSSTSPRFGSMISAKLASPPPSLLLPPSPRLQGRRLTPPSCTPGTP. A disordered region spans residues 1–133; that stretch reads MSSSSSTSPR…PHPSSDEAAS (133 aa). Residues 21–32 are compositionally biased toward pro residues; the sequence is SPPPSLLLPPSP. The segment covering 71–88 has biased composition (polar residues); that stretch reads GSATTPRSPAQLGSSQLH. Over residues 89–99 the composition is skewed to basic residues; sequence RWSRARAHRSG. Residues 100-111 are compositionally biased toward basic and acidic residues; that stretch reads RRLEWPTIRDRG. 171–178 serves as a coordination point for ADP; the sequence is HSVNAALG.

Belongs to the pyruvate, phosphate/water dikinase regulatory protein family. PDRP subfamily.

Its subcellular location is the plastid. It localises to the chloroplast. The catalysed reaction is N(tele)-phospho-L-histidyl/L-threonyl-[pyruvate, phosphate dikinase] + ADP = N(tele)-phospho-L-histidyl/O-phospho-L-threonyl-[pyruvate, phosphate dikinase] + AMP + H(+). The enzyme catalyses N(tele)-phospho-L-histidyl/O-phospho-L-threonyl-[pyruvate, phosphate dikinase] + phosphate + H(+) = N(tele)-phospho-L-histidyl/L-threonyl-[pyruvate, phosphate dikinase] + diphosphate. With respect to regulation, regulated by light/dark exposure. Its function is as follows. Bifunctional serine/threonine kinase and phosphorylase involved in the dark/light-mediated regulation of PPDK by catalyzing its phosphorylation/dephosphorylation. Dark/light-induced changes in stromal concentrations of the competing ADP and Pi substrates govern the direction of the reaction. In the dark, phosphorylates the catalytic intermediate of PPDK (PPDK-HisP), inactivating it. Light exposure induces the phosphorolysis reaction that reactivates PPDK. The sequence is that of Probable pyruvate, phosphate dikinase regulatory protein, chloroplastic (PDRP1) from Oryza sativa subsp. indica (Rice).